A 505-amino-acid chain; its full sequence is MSVELVDYDEAVAEFDPVLGLEVHVELNTATKMFSGSPTEFGAEPNTQVDPTSLGLPGAMPVLNAKALESAIRIGLALNCSIAERCRFARKNYFYPDMPKNFQTSQYDEPIAFDGYLDVDVPASEDGTKPAFTYRVLIERAHMEEDTGKSLHVGGSTGRIHGAEFSLVDYNRAGIPLIEIVTRPLEGTGDRAPDVARAYVAALRDVLRSLDVSDVKMEQGSLRCDVNLSLRPTPQSPLGTRSETKNVNSLRSVERAVRYEVSRHAAVLRSGAKVVQETRHWHEDTGLTTSGREKSDAEDYRYFPEPDLVPIVPDRAWVEELRAALPEPPAQRRKRLHAEWGFSDLEFRDLVNAGAIDLVEATVAAGASPAAARKWWSGELARRANADGVELSALAVGPADVAELAALVEAGKLTDRLAREALEGVLAGEGSVAEVVEARGLVVVQDDGALVAAVEKVLAANPDVVEKIRGGKAQAAGALIGQVMKEMRGKADAARIRELVLERVG.

The protein belongs to the GatB/GatE family. GatB subfamily. In terms of assembly, heterotrimer of A, B and C subunits.

The catalysed reaction is L-glutamyl-tRNA(Gln) + L-glutamine + ATP + H2O = L-glutaminyl-tRNA(Gln) + L-glutamate + ADP + phosphate + H(+). It catalyses the reaction L-aspartyl-tRNA(Asn) + L-glutamine + ATP + H2O = L-asparaginyl-tRNA(Asn) + L-glutamate + ADP + phosphate + 2 H(+). In terms of biological role, allows the formation of correctly charged Asn-tRNA(Asn) or Gln-tRNA(Gln) through the transamidation of misacylated Asp-tRNA(Asn) or Glu-tRNA(Gln) in organisms which lack either or both of asparaginyl-tRNA or glutaminyl-tRNA synthetases. The reaction takes place in the presence of glutamine and ATP through an activated phospho-Asp-tRNA(Asn) or phospho-Glu-tRNA(Gln). This Kineococcus radiotolerans (strain ATCC BAA-149 / DSM 14245 / SRS30216) protein is Aspartyl/glutamyl-tRNA(Asn/Gln) amidotransferase subunit B.